A 1265-amino-acid polypeptide reads, in one-letter code: Nestin (1265 aa).

A head region spans residues M1 to E16. Residues E17–L52 are coil 1A. An IF rod domain is found at E17–I324. The tract at residues K53–A64 is linker 1. The tract at residues Q65–M160 is coil 1B. Residues Q161 to P183 are linker 12. The tract at residues D184 to N203 is coil 2A. A linker 2 region spans residues Y204 to K206. A coil 2B region spans residues Q207 to I324. The tail stretch occupies residues D325–E1265. Positions P383–T402 are enriched in polar residues. 5 disordered regions span residues P383–S521, F667–E830, H863–Q1073, A1093–S1116, and I1232–E1265. Residues E403–E418 show a composition bias toward basic and acidic residues. Polar residues predominate over residues D422 to K441. The span at A444–D459 shows a compositional bias: basic and acidic residues. A compositionally biased stretch (polar residues) spans L479–T496. Composition is skewed to acidic residues over residues E508–V520 and L730–E739. Composition is skewed to basic and acidic residues over residues Y784 to E796, E803 to T819, and H863 to D897. Residues F901–T910 show a composition bias toward polar residues. Basic and acidic residues predominate over residues E911 to N935. Residues S943–L956 are compositionally biased toward low complexity. Over residues P1015 to V1043 the composition is skewed to polar residues. Positions S1061 to K1070 are enriched in basic and acidic residues. Polar residues-rich tracts occupy residues S1105–S1116 and P1242–D1251. The segment covering D1252 to E1265 has biased composition (acidic residues).

The protein belongs to the intermediate filament family. As to quaternary structure, forms homodimers and homotetramers in vitro. In mixtures with other intermediate filament proteins such as vimentin and alpha-internexin, preferentially forms heterodimers. In terms of tissue distribution, widely expressed throughout the developing nervous system at 24 hours post-fertilization (hpf). As development progresses, expression becomes restricted to proliferative zones of the developing and postembryonic central nervous system. In the peripheral nervous system, expressed in the cranial ganglia. Also expressed in mesodermal muscle precursor cells and in cranial mesenchymal tissue.

Its function is as follows. Promotes the disassembly of phosphorylated vimentin intermediate filaments (IF) during mitosis and may play a role in the trafficking and distribution of IF proteins and other cellular factors to daughter cells during progenitor cell division. Required for survival, renewal and mitogen-stimulated proliferation of neural progenitor cells. Required for brain and eye development. The sequence is that of Nestin (nes) from Danio rerio (Zebrafish).